Reading from the N-terminus, the 578-residue chain is SUMOylated effector protein AmpA (578 aa).

The disordered stretch occupies residues 144–169 (PQTVDPSVVESATGSGVDTQEEQEID). 3 consecutive repeat copies span residues 180-272 (TEEQ…SVEA), 304-425 (KEET…VSVE), and 428-557 (TEEP…MQQE). Positions 180 to 557 (TEEQEVILEE…VEADAGMQQE (378 aa)) are 3 X approximate tandem repeats. The segment at 516–578 (VSVEADAGMQ…DPDDEDVLSY (63 aa)) is disordered.

Post-translationally, polysumoylated during infection on at least two lysine residues, in the N- and C-terminal section. SUMO2/3 modification of AmpA throughout the infection cycle is likely critical for bacterial intracellular survival, while terminal SUMO1 conjugation of AmpA may promote a late-stage infection cycle event. Only a small portion of the available AmpA pool is actually SUMOylated at any given time.

Its subcellular location is the secreted. It is found in the host membrane. The protein resides in the host cytoplasm. The protein localises to the host cytosol. Its function is as follows. Secreted effector that hijacks host cell SUMOylation during A.phagocytophilum infection and is important for the pathogen's intracellular survival. This Anaplasma phagocytophilum (strain HZ) protein is SUMOylated effector protein AmpA.